The chain runs to 94 residues: Integration host factor subunit beta (94 aa).

It belongs to the bacterial histone-like protein family. Heterodimer of an alpha and a beta chain.

Functionally, this protein is one of the two subunits of integration host factor, a specific DNA-binding protein that functions in genetic recombination as well as in transcriptional and translational control. This chain is Integration host factor subunit beta, found in Edwardsiella ictaluri (strain 93-146).